The chain runs to 304 residues: Glutaminase (304 aa).

Residues Ser63, Asn113, Glu157, Asn164, Tyr188, Tyr240, and Val258 each coordinate substrate.

The protein belongs to the glutaminase family. As to quaternary structure, homotetramer.

The catalysed reaction is L-glutamine + H2O = L-glutamate + NH4(+). In Christiangramia forsetii (strain DSM 17595 / CGMCC 1.15422 / KT0803) (Gramella forsetii), this protein is Glutaminase.